Here is a 130-residue protein sequence, read N- to C-terminus: Large ribosomal subunit protein bL12 (130 aa).

Belongs to the bacterial ribosomal protein bL12 family. In terms of assembly, homodimer. Part of the ribosomal stalk of the 50S ribosomal subunit. Forms a multimeric L10(L12)X complex, where L10 forms an elongated spine to which 2 to 4 L12 dimers bind in a sequential fashion. Binds GTP-bound translation factors.

In terms of biological role, forms part of the ribosomal stalk which helps the ribosome interact with GTP-bound translation factors. Is thus essential for accurate translation. The protein is Large ribosomal subunit protein bL12 of Chlamydia trachomatis serovar L2 (strain ATCC VR-902B / DSM 19102 / 434/Bu).